A 307-amino-acid polypeptide reads, in one-letter code: Cyclin-dependent kinase 5 activator 1 (307 aa).

Gly-2 is lipidated: N-myristoyl glycine. Ser-8 carries the phosphoserine; by CDK5 modification. A disordered region spans residues 97–135 (TFAQPPPAQPPAPPASQLSGSQTGVSSSVKKAPHPAVSS). Positions 100–110 (QPPPAQPPAPP) are enriched in pro residues. Residues 112–125 (SQLSGSQTGVSSSV) are compositionally biased toward polar residues. Residue Thr-138 is modified to Phosphothreonine; by CDK5.

Belongs to the cyclin-dependent kinase 5 activator family. In terms of assembly, heterodimer composed of a catalytic subunit CDK5 and a regulatory subunit CDK5R1 (p25) and macromolecular complex composed of at least CDK5, CDK5R1 (p35) and CDK5RAP1 or CDK5RAP2 or CDK5RAP3. Only the heterodimer shows kinase activity. Interacts with EPHA4 and NGEF; may mediate the activation of NGEF by EPHA4. Interacts with RASGRF2. The complex p35/CDK5 interacts with CLOCK. The p35 form is proteolytically cleaved by calpain, giving rise to the p25 form. P35 has a 5 to 10 fold shorter half-life compared to p25. The conversion results in deregulation of the CDK5 kinase: p25/CDK5 kinase displays an increased and altered tau phosphorylation in comparison to the p35/CDK5 kinase in vivo. Post-translationally, myristoylated. A proper myristoylation signal is essential for the proper distribution of p35. In terms of processing, phosphorylation at Ser-8 and Thr-138 by CDK5 prevents calpain-mediated proteolysis. Ubiquitinated, leading to its degradation: degradation of p35 by proteasome results in down-regulation of CDK5 activity. During this process, CDK5 phosphorylates p35 and induces its ubiquitination and subsequent degradation. Ubiquitinated by the CRL2(FEM1B) complex, which recognizes the -Gly-Leu-Asp-Arg C-degron at the C-terminus, leading to its degradation. Brain and neuron specific.

Its subcellular location is the cell membrane. The protein resides in the cell projection. The protein localises to the neuron projection. It localises to the nucleus. It is found in the cytoplasm. Its subcellular location is the perinuclear region. The protein resides in the perikaryon. Its function is as follows. p35 is a neuron specific activator of CDK5. The complex p35/CDK5 is required for neurite outgrowth and cortical lamination. Involved in dendritic spine morphogenesis by mediating the EFNA1-EPHA4 signaling. Activator of TPKII. The complex p35/CDK5 participates in the regulation of the circadian clock by modulating the function of CLOCK protein: phosphorylates CLOCK at 'Thr-451' and 'Thr-461' and regulates the transcriptional activity of the CLOCK-BMAL1 heterodimer in association with altered stability and subcellular distribution. The polypeptide is Cyclin-dependent kinase 5 activator 1 (CDK5R1) (Bos taurus (Bovine)).